A 189-amino-acid polypeptide reads, in one-letter code: MADEQTVDTQNPEANQAPEASGDDLATRVQVLEEQLAAAQDQSLRVAADLQNVRRRAEQDVEKAHKFALEKFAGDLLPIVDSLERGLELSSPDDESIRPMREGIELTLKMFHDTLTRYQLVAVSPQEGEPFNAVEHQAMAMQESADLEPNSILKVFQKGYQLNGRLLRPAMVVVSKAPAPVSPSIDEKA.

The interval 1-24 is disordered; that stretch reads MADEQTVDTQNPEANQAPEASGDD.

The protein belongs to the GrpE family. As to quaternary structure, homodimer.

Its subcellular location is the cytoplasm. Functionally, participates actively in the response to hyperosmotic and heat shock by preventing the aggregation of stress-denatured proteins, in association with DnaK and GrpE. It is the nucleotide exchange factor for DnaK and may function as a thermosensor. Unfolded proteins bind initially to DnaJ; upon interaction with the DnaJ-bound protein, DnaK hydrolyzes its bound ATP, resulting in the formation of a stable complex. GrpE releases ADP from DnaK; ATP binding to DnaK triggers the release of the substrate protein, thus completing the reaction cycle. Several rounds of ATP-dependent interactions between DnaJ, DnaK and GrpE are required for fully efficient folding. The chain is Protein GrpE from Pseudomonas fluorescens (strain Pf0-1).